Consider the following 641-residue polypeptide: Chaperone protein DnaK (641 aa).

Thr200 is modified (phosphothreonine; by autocatalysis). The span at 605–623 shows a compositional bias: low complexity; the sequence is AAEQGGSADAASGNAQASK. The disordered stretch occupies residues 605-627; the sequence is AAEQGGSADAASGNAQASKAADD.

This sequence belongs to the heat shock protein 70 family.

Acts as a chaperone. This is Chaperone protein DnaK from Xanthomonas oryzae pv. oryzae (strain MAFF 311018).